The sequence spans 104 residues: uncharacterized protein (104 aa).

2 helical membrane passes run 26 to 46 (IGTG…FTFF) and 70 to 90 (GLLG…IIAI).

It localises to the membrane. This is an uncharacterized protein from Acanthamoeba polyphaga mimivirus (APMV).